We begin with the raw amino-acid sequence, 533 residues long: Sterol 26-hydroxylase, mitochondrial (533 aa).

The transit peptide at 1–32 (MAVLSRMRLRWALLDTRVMGHGLCPQGARAKA) directs the protein to the mitochondrion. Residues 38 to 58 (LRDHESTEGPGTGQDRPRLRS) are disordered. 2 positions are modified to N6-acetyllysine: lysine 142 and lysine 375. Residues 386–400 (PLLKAVIKETLRLYP) form a sterol-binding region. Residue cysteine 479 coordinates heme. N6-acetyllysine is present on residues lysine 512 and lysine 523.

Belongs to the cytochrome P450 family. In terms of assembly, interacts with HSP70; this interaction is required for initial targeting to mitochondria. It depends on heme as a cofactor. As to expression, expressed in liver, kidney and ovary.

It localises to the mitochondrion inner membrane. The enzyme catalyses 5beta-cholestane-3alpha,7alpha,12alpha-triol + 6 reduced [adrenodoxin] + 3 O2 + 5 H(+) = (25R)-3alpha,7alpha,12alpha-trihydroxy-5beta-cholestan-26-oate + 6 oxidized [adrenodoxin] + 4 H2O. It catalyses the reaction cholestanol + 2 reduced [adrenodoxin] + O2 + 2 H(+) = (25R)-26-hydroxycholestanol + 2 oxidized [adrenodoxin] + H2O. The catalysed reaction is (25R)-3beta-hydroxycholest-5-en-7-one-26-al + 2 reduced [adrenodoxin] + O2 + H(+) = (25R)-3beta-hydroxycholest-5-en-7-one-26-oate + 2 oxidized [adrenodoxin] + H2O. It carries out the reaction (25R)-3beta,26-dihydroxycholest-5-en-7-one + 2 reduced [adrenodoxin] + O2 + 2 H(+) = (25R)-3beta-hydroxycholest-5-en-7-one-26-al + 2 oxidized [adrenodoxin] + 2 H2O. The enzyme catalyses 7-oxocholesterol + 2 reduced [adrenodoxin] + O2 + 2 H(+) = (25R)-3beta,26-dihydroxycholest-5-en-7-one + 2 oxidized [adrenodoxin] + H2O. It catalyses the reaction calciol + 2 reduced [adrenodoxin] + O2 + 2 H(+) = calcidiol + 2 oxidized [adrenodoxin] + H2O. The catalysed reaction is (25R)-5beta-cholestane-3alpha,7alpha,12alpha,26-tetrol + 2 reduced [adrenodoxin] + O2 + 2 H(+) = (25R)-3alpha,7alpha,12alpha-trihydroxy-5beta-cholestan-26-al + 2 oxidized [adrenodoxin] + 2 H2O. It carries out the reaction 2 reduced [adrenodoxin] + cholesterol + O2 + 2 H(+) = (25R)-cholest-5-ene-3beta,26-diol + 2 oxidized [adrenodoxin] + H2O. The enzyme catalyses (25R)-3beta,4beta-dihydroxycholest-5-en-26-al + 2 reduced [adrenodoxin] + O2 + H(+) = (25R)-3beta,4beta-dihydroxycholest-5-en-26-oate + 2 oxidized [adrenodoxin] + H2O. It catalyses the reaction (25R)-4beta,26-dihydroxycholesterol + 2 reduced [adrenodoxin] + O2 + 2 H(+) = (25R)-3beta,4beta-dihydroxycholest-5-en-26-al + 2 oxidized [adrenodoxin] + 2 H2O. The catalysed reaction is 4beta-hydroxycholesterol + 2 reduced [adrenodoxin] + O2 + 2 H(+) = (25R)-4beta,26-dihydroxycholesterol + 2 oxidized [adrenodoxin] + H2O. It carries out the reaction (25R)-3beta-hydroxy-5-cholesten-26-al + 2 reduced [adrenodoxin] + O2 + H(+) = (25R)-3beta-hydroxy-5-cholestenoate + 2 oxidized [adrenodoxin] + H2O. The enzyme catalyses (25R)-cholest-5-ene-3beta,26-diol + 2 reduced [adrenodoxin] + O2 + 2 H(+) = (25R)-3beta-hydroxy-5-cholesten-26-al + 2 oxidized [adrenodoxin] + 2 H2O. It catalyses the reaction (25R)-3alpha,7alpha,12alpha-trihydroxy-5beta-cholestan-26-al + 2 reduced [adrenodoxin] + O2 + H(+) = (25R)-3alpha,7alpha,12alpha-trihydroxy-5beta-cholestan-26-oate + 2 oxidized [adrenodoxin] + H2O. The catalysed reaction is 5beta-cholestane-3alpha,7alpha,12alpha-triol + 2 reduced [adrenodoxin] + O2 + 2 H(+) = (25R)-5beta-cholestane-3alpha,7alpha,12alpha,26-tetrol + 2 oxidized [adrenodoxin] + H2O. Its pathway is hormone biosynthesis; cholecalciferol biosynthesis. It participates in steroid metabolism; cholesterol degradation. It functions in the pathway lipid metabolism; bile acid biosynthesis. In terms of biological role, cytochrome P450 monooxygenase that catalyzes regio- and stereospecific hydroxylation of cholesterol and its derivatives. Hydroxylates (with R stereochemistry) the terminal methyl group of cholesterol side-chain in a three step reaction to yield at first a C26 alcohol, then a C26 aldehyde and finally a C26 acid. Regulates cholesterol homeostasis by catalyzing the conversion of excess cholesterol to bile acids via both the 'neutral' (classic) and the 'acid' (alternative) pathways. May also regulate cholesterol homeostasis via generation of active oxysterols, which act as ligands for NR1H2 and NR1H3 nuclear receptors, modulating the transcription of genes involved in lipid metabolism. Plays a role in cholestanol metabolism in the cerebellum. Similarly to cholesterol, hydroxylates cholestanol and may facilitate sterol diffusion through the blood-brain barrier to the systemic circulation for further degradation. Also hydroxylates retinal 7-ketocholesterol, a noxious oxysterol with pro-inflammatory and pro-apoptotic effects, and may play a role in its elimination from the retinal pigment epithelium. May play a redundant role in vitamin D biosynthesis. Catalyzes 25-hydroxylation of vitamin D3 that is required for its conversion to a functionally active form. In Rattus norvegicus (Rat), this protein is Sterol 26-hydroxylase, mitochondrial (Cyp27a1).